We begin with the raw amino-acid sequence, 775 residues long: E3 ubiquitin-protein ligase UHRF1 (775 aa).

A Ubiquitin-like domain is found at 1–77 (MWIQVRTMDG…IVQLLVRQIP (77 aa)). Residues 81-128 (PTKDKECGISDADSGCGSGQGESDKNSSCGEGATDVDGQPAGINSENV) are disordered. 2 tudor-like regions span residues 131–207 (SLYK…LRAR) and 214–283 (DLKV…IEEP). The tract at residues 293-301 (PQKRQNGPE) is linker. A PHD-type zinc finger spans residues 299-366 (GPECKHCKDN…DWYCPDCRND (68 aa)). Histone H3R2me0 binding stretches follow at residues 333–337 (CDECD) and 353–355 (PQD). Positions 419–582 (GPIPGVPVGT…FLVWRYLLRR (164 aa)) constitute a YDG domain. Positions 445–446 (HV) are required to promote base flipping. DNA-binding positions include 463 to 464 (AG) and D469. Required for formation of a 5-methylcytosine-binding pocket stretches follow at residues 466–469 (YEDD) and 478–481 (YTGS). Basic and acidic residues predominate over residues 616-628 (ASKEREKENKTED). Residues 616 to 655 (ASKEREKENKTEDELSESPSKGKRKRNSAGSGLSDAKSTP) form a disordered region. The RING-type zinc finger occupies 706–745 (CICCQEVVYEPITTECHHNICKGCLDRSFKALVHNCPACR).

It localises to the nucleus. The enzyme catalyses S-ubiquitinyl-[E2 ubiquitin-conjugating enzyme]-L-cysteine + [acceptor protein]-L-lysine = [E2 ubiquitin-conjugating enzyme]-L-cysteine + N(6)-ubiquitinyl-[acceptor protein]-L-lysine.. The protein operates within protein modification; protein ubiquitination. Multidomain protein that acts as a key epigenetic regulator by bridging DNA methylation and chromatin modification. Specifically recognizes and binds hemimethylated DNA at replication forks via its YDG domain and recruits dnmt1 methyltransferase to ensure faithful propagation of the DNA methylation patterns through DNA replication. In addition to its role in maintenance of DNA methylation, also plays a key role in chromatin modification: through its tudor-like regions and PHD-type zinc fingers, specifically recognizes and binds histone H3 trimethylated at 'Lys-9' (H3K9me3) and unmethylated at 'Arg-2' (H3R2me0), respectively, and recruits chromatin proteins. Enriched in pericentric heterochromatin where it recruits different chromatin modifiers required for this chromatin replication. Also localizes to euchromatic regions where it negatively regulates transcription possibly by impacting DNA methylation and histone modifications. Has E3 ubiquitin-protein ligase activity by mediating the ubiquitination of target proteins. However, it is still unclear how E3 ubiquitin-protein ligase activity is related to its role in chromatin in vivo. This Xenopus tropicalis (Western clawed frog) protein is E3 ubiquitin-protein ligase UHRF1 (uhrf1).